A 274-amino-acid chain; its full sequence is 2,3,4,5-tetrahydropyridine-2,6-dicarboxylate N-succinyltransferase (274 aa).

Substrate contacts are provided by arginine 106 and aspartate 143.

Belongs to the transferase hexapeptide repeat family. Homotrimer.

It localises to the cytoplasm. It carries out the reaction (S)-2,3,4,5-tetrahydrodipicolinate + succinyl-CoA + H2O = (S)-2-succinylamino-6-oxoheptanedioate + CoA. It participates in amino-acid biosynthesis; L-lysine biosynthesis via DAP pathway; LL-2,6-diaminopimelate from (S)-tetrahydrodipicolinate (succinylase route): step 1/3. In Acidovorax ebreus (strain TPSY) (Diaphorobacter sp. (strain TPSY)), this protein is 2,3,4,5-tetrahydropyridine-2,6-dicarboxylate N-succinyltransferase.